A 548-amino-acid chain; its full sequence is MLEHPQRFVRNIPDSSASSQQYPQQQQHPPQLPQHQNLNLNQNQNLNQNQIYQYRPQVPVPVPGSPAHHQRHSSLSQQQQLHHHRTLSTASSCSAQHKSVTFGQPALDCGGNGSGSANGSGSGNSSSGSAAGNAGTQSMAGNMKHGKSQDDVCYVVAKYDYAAQGAQELDLRKNERYLLLDDSKHWWRVQNSRNQSGYVPSNYVKKEKPSLFDSIKKKVKKGSGSKTLPNCSPSRQVESPTMSRRLPPDPAEAIGTAVVKYNYQAQQPDELSLTKGTRILILEKSNDGWWRGQSGNSVGWFPSNYTTEDCDNDGEIHTYAMAENVLDIVVALYSFTSNNDQELSFEKGDRLEIVDRPASDPDWYKARNNQGQVGLVPRNYLQELNDYLATPYRNASASAGNGNGGGSNGGAGGGGGNDSMERRNEGNKPAAQSSGQPIERPNLAGKSWYYGAITRSQCDTVLNGHGHDGDFLIRDSETNMGDYSVSLKAPGRNKHFRVHVEQNMYCIGQRKFHSLDQLVDHYQRAPIYTNKQGEKLYLVRSLPKANGT.

Disordered stretches follow at residues 12–37, 57–92, and 113–146; these read IPDS…QHQN, QVPV…TASS, and GSGS…MKHG. The segment covering 20-37 has biased composition (low complexity); sequence QQYPQQQQHPPQLPQHQN. Positions 113 to 122 are enriched in gly residues; that stretch reads GSGSANGSGS. The segment covering 123-135 has biased composition (low complexity); it reads GNSSSGSAAGNAG. Residues 150–209 form the SH3 1 domain; sequence DDVCYVVAKYDYAAQGAQELDLRKNERYLLLDDSKHWWRVQNSRNQSGYVPSNYVKKEKP. A disordered region spans residues 219-247; that stretch reads VKKGSGSKTLPNCSPSRQVESPTMSRRLP. The segment covering 227–242 has biased composition (polar residues); the sequence is TLPNCSPSRQVESPTM. 2 consecutive SH3 domains span residues 252–311 and 324–386; these read EAIG…EDCD and NVLD…ELND. The interval 398–442 is disordered; it reads SAGNGNGGGSNGGAGGGGGNDSMERRNEGNKPAAQSSGQPIERPN. Residues 401-417 are compositionally biased toward gly residues; the sequence is NGNGGGSNGGAGGGGGN. One can recognise an SH2 domain in the interval 448–542; the sequence is WYYGAITRSQ…GEKLYLVRSL (95 aa).

Interacts (via SH2 and SH3 domains) with Dscam1 (via cytoplasmic domain); the interaction is direct and requires Dscam1 to be phosphorylated. Interacts (via SH2 and SH3 domains) with InR/Insulin-like receptor (via C-terminal cytoplasmic region); the interaction requires InR kinase activity, probably for autophosphorylation stimulated by insulin signaling. Interacts with Ptp61F (via C-terminus); this interaction is independent of insulin stimulation. Interacts (via SH3 domain 2) with Pak (via N-terminal PXXP motif). Post-translationally, phosphorylated by Src42A and possibly by other tyrosine kinases. Constitutively dephosphorylated by its binding partner Ptp61F.

It is found in the perikaryon. The protein localises to the cell projection. It localises to the axon. The protein resides in the growth cone. Its function is as follows. Adapter protein that links cell surface receptor tyrosine phosphorylation to downstream signaling pathways and effectors, many of which are involved in regulation of the actin cytoskeleton. Recruited by Dscam1/Down syndrome cell adhesion molecule homolog and InR/insulin-like receptor. Recruits Pak to membranes, probably when dock/dreadlocks is associated with activated receptors. Required for guidance and targeting of photoreceptor (R cell) axon projections but not for axon outgrowth, differentiation or target induction in the developing eye. As part of a signaling pathway that involves the lbm/late bloomer protein, involved in synapse formation of the RP3 motorneuron at the muscle 7/6 cleft, probably by stimulating axon defasciculation from other SNb neurons. The sequence is that of SH2/SH3 adapter protein dreadlocks from Drosophila melanogaster (Fruit fly).